Consider the following 284-residue polypeptide: Digeranylgeranylglyceryl phosphate synthase (284 aa).

A run of 7 helical transmembrane segments spans residues 10–30 (IHNVIGAGLGAFTGYVASSMW), 37–57 (LILAVLVVALVDAGGNAINDV), 76–98 (AVSLRTATSLSYGLMGVGVILSA), 102–119 (YLQFLVALLTSVALIFYA), 126–146 (GIYGNLVVATATALSLFYGGL), 217–237 (LPLFLGYNILYGIVLVPFLYI), and 260–280 (GSAFLGMVAFALGSLPFQFLF).

This sequence belongs to the UbiA prenyltransferase family. DGGGP synthase subfamily. Mg(2+) serves as cofactor.

Its subcellular location is the cell membrane. It carries out the reaction sn-3-O-(geranylgeranyl)glycerol 1-phosphate + (2E,6E,10E)-geranylgeranyl diphosphate = 2,3-bis-O-(geranylgeranyl)-sn-glycerol 1-phosphate + diphosphate. It functions in the pathway membrane lipid metabolism; glycerophospholipid metabolism. Its function is as follows. Prenyltransferase that catalyzes the transfer of the geranylgeranyl moiety of geranylgeranyl diphosphate (GGPP) to the C2 hydroxyl of (S)-3-O-geranylgeranylglyceryl phosphate (GGGP). This reaction is the second ether-bond-formation step in the biosynthesis of archaeal membrane lipids. This is Digeranylgeranylglyceryl phosphate synthase from Metallosphaera sedula (strain ATCC 51363 / DSM 5348 / JCM 9185 / NBRC 15509 / TH2).